The primary structure comprises 209 residues: MAAVRRRERDVVEENGVTTTTVKRRKMEEEVDLVESRIILSPCVQATNRGGIVARNSAGASETSVVIVRRRDSPPVEEQCQIEEEDSSVSCCSTSEEKSKRRIEFVDLEENNGDDRETETSWIYDDLNKSEESMNMDSSSVAVEDVESRRRLRKSLHETVKEAELEDFFQVAEKDLRNKLLECSMKYNFDFEKDEPLGGGRYEWVKLNP.

The segment at 1–32 (MAAVRRRERDVVEENGVTTTTVKRRKMEEEVD) is required for nuclear localization.

It belongs to the CDI family. ICK/KRP subfamily. Specifically interacts with CDKA-1, but not with CDKB1-1. Phosphorylated.

The protein localises to the nucleus. It localises to the nucleoplasm. In terms of biological role, binds and inhibits CYCD2-1/CDKA-1 complex kinase activity. Regulates cell division which is crucial for plant growth, development and morphogenesis. May regulate early lateral root initiation by blocking the G1/S phase transition. Controls the mitosis-to-endocycle transition and the onset of the endoreduplication cycle during leaf development through inhibition of mitotic CDKA-1 kinase complexes. Specifically targets CDKA-1. This is Cyclin-dependent kinase inhibitor 2 (KRP2) from Arabidopsis thaliana (Mouse-ear cress).